A 341-amino-acid chain; its full sequence is Adenine deaminase (341 aa).

Positions 17, 19, and 197 each coordinate Zn(2+). The active-site Proton donor is the glutamate 200. Aspartate 278 serves as a coordination point for Zn(2+). Aspartate 279 contributes to the substrate binding site.

Belongs to the metallo-dependent hydrolases superfamily. Adenosine and AMP deaminases family. Adenine deaminase type 2 subfamily. Zn(2+) is required as a cofactor.

The enzyme catalyses adenine + H2O + H(+) = hypoxanthine + NH4(+). Its function is as follows. Catalyzes the hydrolytic deamination of adenine to hypoxanthine. Plays an important role in the purine salvage pathway and in nitrogen catabolism. This chain is Adenine deaminase, found in Chlorobium luteolum (strain DSM 273 / BCRC 81028 / 2530) (Pelodictyon luteolum).